The chain runs to 1522 residues: MRNCLPMELNLRKGDKVWVEDKDLAWIAADVLDSFDNKLHVETSTGKKVFVSPEKLFRRDPDDEEHNGVDDMTKLTYLHEAGVLYNLQRRYALNDIYTYTGSILIAVNPFKKLPHLYNGHMMEQYMGAPFGELSPHVFAVSDVAYRAMIDDSRSQSILVSGESGAGKTETTKLIMQYLTFVGGRATDDDRSVEQQVLESNPLLEAFGNAKTVRNDNSSRFGKFVEIQFDTNGRISGAAIRTYLLERSRVVRITDPERNYHCFYQLCASGNDAEKYKLSNPRQFHYLNQSKTYELEGVSSAEEYKNTRRAMDIVGISQDEQEGIFRTLAAILHLGNVEFSSGREHDSSVVKDPESRHHLQMAADLFKCDANLLLASLCTRSILTREGIIIKALDPNAAVTSRDTLAKTVYAHLFDWLVDKINKSVGQDPESRFQIGVLDIYGFECFKNNSFEQFCINFANEKLQQHFNEHVFKMEQDEYRKEEINWSYIEFIDNQDVLDLIEKKPIGVIALLDEACMFPRSTHESFSMKLFQNFRFHPRLEKPKFSETDFTLSHYAGKVTYQTEAFLDKNRDYTIVEHCNLLSSSKCPFVAGIFPSAPEESTRSSYKFSSVSSRFKQQLQALMETLSKTEPHYVRCVKPNSLNRPQKFESLSVLHQLRCGGVLEAVRISLAGYPTRRNYSDFVDRFGLLAPEFMDESNDEQALTEKILSKLGLGNYQLGRTKVFLRAGQIGILDSRRAEVLDASARLIQRRLRTFVTHQNFISARASAISIQAYCRGCLSRNAYATRRNAAAAVLVQKHVRRWLSRCAFVKLVSAAIVLQSCIRADSTRLKFSHQKEHRAASLIQAHWRIHKFRSAFRHRQSSIIAIQCRWRQKLAKREFRKLKQVANEAGALRLAKTKLEKRLEDLEWRLQLEKRLRTSGEEAKSSEISKLQKTLESFSLKLDAARLATINECNKNAVLEKQLDISMKEKSAVERELNGMVELKKDNALLKNSMNSLEKKNRVLEKELLNAKTNCNNTLQKLKEAEKRCSELQTSVQSLEEKLSHLENENQVLMQKTLITSPERIGQILGEKHSSAVVPAQNDRRSVFETPTPSKHIMPFSHSLSESRRSKLTAERNLENYELLSRCIKENLGFNDDKPLAACVIYKCLLHWRAFESESTAIFNIIIEGINEALKGGDENGVLPYWLSNASALLCLLQRNLRSNSFLNASAQRSGRAAYGVKSPFKLHGPDDGASHIEARYPALLFKQQLTACVEKIYGLIRDNLKKELSPLLGSCIQAPKASRGIAGKSRSPGGVPQQSPSSQWESILKFLDSLMSRLRENHVPSFFIRKLVTQVFSFINLSLFNSLLLRRECCTFSNGEYVKSGISELEKWIANAKEEFAGTSWHELNYIRQAVGFLVIHQKKKKSLDEIRQDLCPVLTIRQIYRISTMYWDDKYGTQSVSSEVVSQMRVLVDKDNQKQTSNSFLLDDDMSIPFSAEDIDKAIPVLDPSEIEPPKFVSEYTCAQSLVKKPSIASTSKQII.

Residues 12–61 (RKGDKVWVEDKDLAWIAADVLDSFDNKLHVETSTGKKVFVSPEKLFRRDP) enclose the Myosin N-terminal SH3-like domain. Positions 67-737 (NGVDDMTKLT…QIGILDSRRA (671 aa)) constitute a Myosin motor domain. ATP-binding positions include 161-168 (GESGAGKT) and 214-222 (NDNSSRFGK). 4 actin-binding regions span residues 499–533 (LIEKKPIGVIALLDEACMFPRSTHESFSMKLFQNF), 535–558 (FHPRLEKPKFSETDFTLSHYAGKV), 593–618 (FPSAPEESTRSSYKFSSVSSRFKQQL), and 618–640 (LQALMETLSKTEPHYVRCVKPNS). 5 consecutive IQ domains span residues 763–792 (ARASAISIQAYCRGCLSRNAYATRRNAAAA), 788–817 (NAAAAVLVQKHVRRWLSRCAFVKLVSAAIV), 811–840 (LVSAAIVLQSCIRADSTRLKFSHQKEHRAA), 836–865 (EHRAASLIQAHWRIHKFRSAFRHRQSSIIA), and 859–888 (RQSSIIAIQCRWRQKLAKREFRKLKQVANE). Positions 889–1059 (AGALRLAKTK…NQVLMQKTLI (171 aa)) form a coiled coil. The Dilute domain maps to 1164 to 1456 (NIIIEGINEA…VSQMRVLVDK (293 aa)).

It belongs to the TRAFAC class myosin-kinesin ATPase superfamily. Myosin family. Plant myosin class XI subfamily. In terms of assembly, homodimer. Interacts with MYOB1 and MYOB7. Interacts with WIT1 and WIT2. Core component of the LINC complex which is composed of inner nuclear membrane SUN domain-containing proteins coupled to outer nuclear membrane WIP and WIT proteins. The LINC complex also involves nucleoskeletal proteins CRWN/LINC and possibly KAKU4 and the cytoskeletal myosin KAKU1.

Its subcellular location is the cytoplasm. The protein resides in the nucleus membrane. Functionally, myosin heavy chain that is required for the cell cycle-regulated transport of various organelles and proteins for their segregation. Functions by binding with its tail domain to receptor proteins on organelles and exerting force with its N-terminal motor domain against actin filaments, thereby transporting its cargo along polarized actin cables. Involved in trafficking of Golgi stacks and mitochondria. Plays a role in nuclear shape determination. Drives nuclear movement along actin filaments. As component of the SUN-WIP-WIT2-KAKU1 complex, mediates the transfer of cytoplasmic forces to the nuclear envelope (NE), leading to nuclear shape changes. This is Myosin-15 (XI-I) from Arabidopsis thaliana (Mouse-ear cress).